A 213-amino-acid polypeptide reads, in one-letter code: Large ribosomal subunit protein uL3 (213 aa).

An N5-methylglutamine modification is found at Gln-151.

Belongs to the universal ribosomal protein uL3 family. As to quaternary structure, part of the 50S ribosomal subunit. Forms a cluster with proteins L14 and L19. Methylated by PrmB.

One of the primary rRNA binding proteins, it binds directly near the 3'-end of the 23S rRNA, where it nucleates assembly of the 50S subunit. In Rhizobium etli (strain ATCC 51251 / DSM 11541 / JCM 21823 / NBRC 15573 / CFN 42), this protein is Large ribosomal subunit protein uL3.